A 70-amino-acid chain; its full sequence is Translational regulator CsrA (70 aa).

Belongs to the CsrA/RsmA family. In terms of assembly, homodimer; the beta-strands of each monomer intercalate to form a hydrophobic core, while the alpha-helices form wings that extend away from the core.

Its subcellular location is the cytoplasm. In terms of biological role, a translational regulator that binds mRNA to regulate translation initiation and/or mRNA stability. Usually binds in the 5'-UTR at or near the Shine-Dalgarno sequence preventing ribosome-binding, thus repressing translation. Its main target seems to be the major flagellin gene, while its function is anatagonized by FliW. The chain is Translational regulator CsrA from Clostridioides difficile (strain 630) (Peptoclostridium difficile).